We begin with the raw amino-acid sequence, 611 residues long: Dihydroxy-acid dehydratase (611 aa).

Aspartate 81 contributes to the Mg(2+) binding site. Residue cysteine 122 participates in [2Fe-2S] cluster binding. Mg(2+)-binding residues include aspartate 123 and lysine 124. Lysine 124 carries the N6-carboxylysine modification. Cysteine 195 is a [2Fe-2S] cluster binding site. Glutamate 491 contributes to the Mg(2+) binding site. Serine 517 (proton acceptor) is an active-site residue.

Belongs to the IlvD/Edd family. In terms of assembly, homodimer. [2Fe-2S] cluster serves as cofactor. The cofactor is Mg(2+).

It catalyses the reaction (2R)-2,3-dihydroxy-3-methylbutanoate = 3-methyl-2-oxobutanoate + H2O. The catalysed reaction is (2R,3R)-2,3-dihydroxy-3-methylpentanoate = (S)-3-methyl-2-oxopentanoate + H2O. It functions in the pathway amino-acid biosynthesis; L-isoleucine biosynthesis; L-isoleucine from 2-oxobutanoate: step 3/4. It participates in amino-acid biosynthesis; L-valine biosynthesis; L-valine from pyruvate: step 3/4. In terms of biological role, functions in the biosynthesis of branched-chain amino acids. Catalyzes the dehydration of (2R,3R)-2,3-dihydroxy-3-methylpentanoate (2,3-dihydroxy-3-methylvalerate) into 2-oxo-3-methylpentanoate (2-oxo-3-methylvalerate) and of (2R)-2,3-dihydroxy-3-methylbutanoate (2,3-dihydroxyisovalerate) into 2-oxo-3-methylbutanoate (2-oxoisovalerate), the penultimate precursor to L-isoleucine and L-valine, respectively. This Brucella canis (strain ATCC 23365 / NCTC 10854 / RM-666) protein is Dihydroxy-acid dehydratase.